Reading from the N-terminus, the 494-residue chain is Endoglucanase 22 (494 aa).

The first 21 residues, 1 to 21 (MKPLVCSFIVILLILLPTTIS), serve as a signal peptide directing secretion. Residue Asp76 is the Nucleophile of the active site. The active site involves His413. N-linked (GlcNAc...) asparagine glycosylation is present at Asn468. Glu473 is a catalytic residue.

The protein belongs to the glycosyl hydrolase 9 (cellulase E) family.

Its subcellular location is the secreted. It catalyses the reaction Endohydrolysis of (1-&gt;4)-beta-D-glucosidic linkages in cellulose, lichenin and cereal beta-D-glucans.. In Arabidopsis thaliana (Mouse-ear cress), this protein is Endoglucanase 22 (GH9B16).